The primary structure comprises 254 residues: MNSQFAGLTREACVALLASYPLSVGILAGQWIALHRYLQQLEALNQPLLHLDLMDGQFCPQFTVGPWAVEQLPQTFIKDVHLMVADQWTAAQACVKAGAHCITLQAEGDIHLHHTLSWLGQQTVPVIGGEMPVIRGISLCPATPLDVIIPILSDVEVIQLLAVNPGYGSKMRSSDLHERVAQLLCLLGDKREGKIIVIDGSLTQDQLPSLIAQGIDRVVSGSALFRDDRLAENTRSWRAMFKVAGDTTFLPSTA.

The chain crosses the membrane as a helical span at residues 14–34; the sequence is VALLASYPLSVGILAGQWIAL. Residues His-50, Asp-52, and His-81 each contribute to the a divalent metal cation site. Asp-52 (proton acceptor) is an active-site residue. Residues His-81, 166–169, 199–201, and 221–222 each bind substrate; these read GYGS, DGS, and GS. Asp-199 contacts a divalent metal cation. The active-site Proton donor is the Asp-199.

This sequence belongs to the ribulose-phosphate 3-epimerase family. The cofactor is a divalent metal cation.

It is found in the cell membrane. The sequence is that of Putative epimerase LsrE (lsrE) from Salmonella paratyphi A (strain ATCC 9150 / SARB42).